We begin with the raw amino-acid sequence, 247 residues long: 3-deoxy-manno-octulosonate cytidylyltransferase (247 aa).

Belongs to the KdsB family.

Its subcellular location is the cytoplasm. It catalyses the reaction 3-deoxy-alpha-D-manno-oct-2-ulosonate + CTP = CMP-3-deoxy-beta-D-manno-octulosonate + diphosphate. It participates in nucleotide-sugar biosynthesis; CMP-3-deoxy-D-manno-octulosonate biosynthesis; CMP-3-deoxy-D-manno-octulosonate from 3-deoxy-D-manno-octulosonate and CTP: step 1/1. Its pathway is bacterial outer membrane biogenesis; lipopolysaccharide biosynthesis. Its function is as follows. Activates KDO (a required 8-carbon sugar) for incorporation into bacterial lipopolysaccharide in Gram-negative bacteria. This is 3-deoxy-manno-octulosonate cytidylyltransferase from Methylorubrum populi (strain ATCC BAA-705 / NCIMB 13946 / BJ001) (Methylobacterium populi).